Reading from the N-terminus, the 322-residue chain is tRNA U34 carboxymethyltransferase (322 aa).

Carboxy-S-adenosyl-L-methionine is bound by residues lysine 90, tryptophan 104, lysine 109, glycine 129, aspartate 151–threonine 153, isoleucine 180–glutamate 181, methionine 195, tyrosine 199, and arginine 314.

This sequence belongs to the class I-like SAM-binding methyltransferase superfamily. CmoB family. As to quaternary structure, homotetramer.

It catalyses the reaction carboxy-S-adenosyl-L-methionine + 5-hydroxyuridine(34) in tRNA = 5-carboxymethoxyuridine(34) in tRNA + S-adenosyl-L-homocysteine + H(+). Functionally, catalyzes carboxymethyl transfer from carboxy-S-adenosyl-L-methionine (Cx-SAM) to 5-hydroxyuridine (ho5U) to form 5-carboxymethoxyuridine (cmo5U) at position 34 in tRNAs. The sequence is that of tRNA U34 carboxymethyltransferase from Citrobacter koseri (strain ATCC BAA-895 / CDC 4225-83 / SGSC4696).